A 1093-amino-acid polypeptide reads, in one-letter code: uncharacterized protein (1093 aa).

This is an uncharacterized protein from Escherichia coli (strain K12).